The sequence spans 311 residues: Aspartate carbamoyltransferase catalytic subunit (311 aa).

Carbamoyl phosphate contacts are provided by arginine 55 and threonine 56. Lysine 84 is a binding site for L-aspartate. Arginine 105, histidine 133, and glutamine 136 together coordinate carbamoyl phosphate. The L-aspartate site is built by arginine 166 and arginine 229. Residues leucine 268 and proline 269 each coordinate carbamoyl phosphate.

Belongs to the aspartate/ornithine carbamoyltransferase superfamily. ATCase family. Heterododecamer (2C3:3R2) of six catalytic PyrB chains organized as two trimers (C3), and six regulatory PyrI chains organized as three dimers (R2).

The catalysed reaction is carbamoyl phosphate + L-aspartate = N-carbamoyl-L-aspartate + phosphate + H(+). It participates in pyrimidine metabolism; UMP biosynthesis via de novo pathway; (S)-dihydroorotate from bicarbonate: step 2/3. Its function is as follows. Catalyzes the condensation of carbamoyl phosphate and aspartate to form carbamoyl aspartate and inorganic phosphate, the committed step in the de novo pyrimidine nucleotide biosynthesis pathway. The protein is Aspartate carbamoyltransferase catalytic subunit of Alkaliphilus metalliredigens (strain QYMF).